Consider the following 299-residue polypeptide: Small ribosomal subunit protein uS2 (299 aa).

Residues 259-291 are compositionally biased toward low complexity; the sequence is AAASAAGPTSWEADGADWAASSAPAAAGESWAE. Residues 259 to 299 form a disordered region; it reads AAASAAGPTSWEADGADWAASSAPAAAGESWAETQPAEGKW.

This sequence belongs to the universal ribosomal protein uS2 family. As to quaternary structure, component of the small ribosomal subunit. Mature ribosomes consist of a small (40S) and a large (60S) subunit. The 40S subunit contains about 33 different proteins and 1 molecule of RNA (18S). The 60S subunit contains about 49 different proteins and 3 molecules of RNA (25S, 5.8S and 5S). Interacts with rps21.

It is found in the cytoplasm. Its function is as follows. Required for the assembly and/or stability of the 40S ribosomal subunit. Required for the processing of the 20S rRNA-precursor to mature 18S rRNA in a late step of the maturation of 40S ribosomal subunits. The sequence is that of Small ribosomal subunit protein uS2 (rps0) from Aspergillus flavus (strain ATCC 200026 / FGSC A1120 / IAM 13836 / NRRL 3357 / JCM 12722 / SRRC 167).